The primary structure comprises 153 residues: Small ribosomal subunit protein eS19 (153 aa).

The protein belongs to the eukaryotic ribosomal protein eS19 family. Part of the 30S ribosomal subunit.

May be involved in maturation of the 30S ribosomal subunit. In Aeropyrum pernix (strain ATCC 700893 / DSM 11879 / JCM 9820 / NBRC 100138 / K1), this protein is Small ribosomal subunit protein eS19.